A 202-amino-acid chain; its full sequence is Large ribosomal subunit protein uL4 (202 aa).

The segment at Lys-47–Arg-67 is disordered.

Belongs to the universal ribosomal protein uL4 family. In terms of assembly, part of the 50S ribosomal subunit.

In terms of biological role, one of the primary rRNA binding proteins, this protein initially binds near the 5'-end of the 23S rRNA. It is important during the early stages of 50S assembly. It makes multiple contacts with different domains of the 23S rRNA in the assembled 50S subunit and ribosome. Its function is as follows. Forms part of the polypeptide exit tunnel. The protein is Large ribosomal subunit protein uL4 of Dichelobacter nodosus (strain VCS1703A).